Here is an 85-residue protein sequence, read N- to C-terminus: UPF0297 protein CLL_A1175 (85 aa).

Belongs to the UPF0297 family.

This Clostridium botulinum (strain Eklund 17B / Type B) protein is UPF0297 protein CLL_A1175.